The primary structure comprises 248 residues: tRNA (guanine-N(1)-)-methyltransferase (248 aa).

S-adenosyl-L-methionine is bound by residues G113 and 133 to 138 (VGDYVL).

It belongs to the RNA methyltransferase TrmD family. Homodimer.

The protein resides in the cytoplasm. The enzyme catalyses guanosine(37) in tRNA + S-adenosyl-L-methionine = N(1)-methylguanosine(37) in tRNA + S-adenosyl-L-homocysteine + H(+). Its function is as follows. Specifically methylates guanosine-37 in various tRNAs. The chain is tRNA (guanine-N(1)-)-methyltransferase from Shewanella oneidensis (strain ATCC 700550 / JCM 31522 / CIP 106686 / LMG 19005 / NCIMB 14063 / MR-1).